The chain runs to 247 residues: Homeobox protein BarH-like 1b (247 aa).

Disordered stretches follow at residues 118 to 138 (RGKL…GRRS) and 197 to 247 (GGGL…SQEE). A DNA-binding region (homeobox) is located at residues 135 to 194 (GRRSRTVFTELQLMGLEKRFEKQKYLSTPDRIDLAESLGLSQLQVKTWYQNRRMKWKKIV). Residues 223 to 234 (EQERARDAEKPP) are compositionally biased toward basic and acidic residues.

Belongs to the BAR homeobox family. In terms of assembly, interacts with serum response factor (SRF). As to expression, expressed in smooth muscle cells of the upper digestive organs and their attached arteries and to craniofacial structures.

The protein resides in the nucleus. Functionally, transcription factor which is involved with the serum response factor (SRF) in the smooth muscle cell-specific transcription of the beta-tropomyosin gene in the upper digestive organs and their attached arteries. The chain is Homeobox protein BarH-like 1b (BARX1B) from Gallus gallus (Chicken).